The sequence spans 121 residues: Small ribosomal subunit protein bS16 (121 aa).

The disordered stretch occupies residues 80–121; the sequence is AGVREKTERNNPNKAKPGKKAQERAEEKAAKAAEAAEAADAE. 2 stretches are compositionally biased toward basic and acidic residues: residues 81–90 and 99–110; these read GVREKTERNN and KAQERAEEKAAK.

It belongs to the bacterial ribosomal protein bS16 family.

This chain is Small ribosomal subunit protein bS16, found in Ruegeria sp. (strain TM1040) (Silicibacter sp.).